We begin with the raw amino-acid sequence, 176 residues long: Translation initiation factor IF-3 (176 aa).

It belongs to the IF-3 family. In terms of assembly, monomer.

It is found in the cytoplasm. In terms of biological role, IF-3 binds to the 30S ribosomal subunit and shifts the equilibrium between 70S ribosomes and their 50S and 30S subunits in favor of the free subunits, thus enhancing the availability of 30S subunits on which protein synthesis initiation begins. The polypeptide is Translation initiation factor IF-3 (Microcystis aeruginosa (strain NIES-843 / IAM M-2473)).